The primary structure comprises 148 residues: MDTPNKDDSIIRFSVSLQQNLLDELDNRIIKNGYSSRSELVRDMIREKLVEDNWAEDNPNDESKIAVLVVIYDHHQRELNQRMIDIQHASGTHVLCTTHIHMDEHNCLETIILQGNSFEIQRLQLEIGGLRGVKFAKLTKASSFEYNE.

Positions 88, 99, 101, and 107 each coordinate Ni(2+).

This sequence belongs to the transcriptional regulatory CopG/NikR family. In terms of assembly, homotetramer. Requires Ni(2+) as cofactor.

Its function is as follows. Transcriptional regulator. In Helicobacter pylori (strain ATCC 700392 / 26695) (Campylobacter pylori), this protein is Putative nickel-responsive regulator.